The primary structure comprises 236 residues: UPF0502 protein BamMC406_5439 (236 aa).

It belongs to the UPF0502 family.

This Burkholderia ambifaria (strain MC40-6) protein is UPF0502 protein BamMC406_5439.